The primary structure comprises 140 residues: 3-hydroxyacyl-[acyl-carrier-protein] dehydratase FabZ (140 aa).

His-47 is a catalytic residue.

The protein belongs to the thioester dehydratase family. FabZ subfamily.

Its subcellular location is the cytoplasm. The catalysed reaction is a (3R)-hydroxyacyl-[ACP] = a (2E)-enoyl-[ACP] + H2O. Involved in unsaturated fatty acids biosynthesis. Catalyzes the dehydration of short chain beta-hydroxyacyl-ACPs and long chain saturated and unsaturated beta-hydroxyacyl-ACPs. The sequence is that of 3-hydroxyacyl-[acyl-carrier-protein] dehydratase FabZ from Streptococcus equi subsp. equi (strain 4047).